Here is a 331-residue protein sequence, read N- to C-terminus: Phenylalanine--tRNA ligase alpha subunit (331 aa).

Mg(2+) is bound at residue Glu252.

The protein belongs to the class-II aminoacyl-tRNA synthetase family. Phe-tRNA synthetase alpha subunit type 1 subfamily. Tetramer of two alpha and two beta subunits. Requires Mg(2+) as cofactor.

The protein localises to the cytoplasm. It catalyses the reaction tRNA(Phe) + L-phenylalanine + ATP = L-phenylalanyl-tRNA(Phe) + AMP + diphosphate + H(+). This Xanthomonas oryzae pv. oryzae (strain MAFF 311018) protein is Phenylalanine--tRNA ligase alpha subunit.